The sequence spans 160 residues: Epithelial membrane protein 1 (160 aa).

Residues 1 to 21 form a helical membrane-spanning segment; it reads MLVLLAAIFVVHIATCVMLFV. 2 N-linked (GlcNAc...) asparagine glycosylation sites follow: Asn35 and Asn43. 3 helical membrane passes run 67 to 87, 95 to 115, and 137 to 157; these read FMIL…FQLF, FFLS…GASI, and FILA…YLVL.

This sequence belongs to the PMP-22/EMP/MP20 family. As to expression, most abundant in squamous epithelia.

It is found in the membrane. This Oryctolagus cuniculus (Rabbit) protein is Epithelial membrane protein 1 (EMP1).